The sequence spans 409 residues: MPFRRTLLAASLALLITGQAPLYAAPPLSMDNGTNTLTVQNSNAWVEVSASALQHNIRTLQAELAGKSKLCAVLKADAYGHGIGLVMPSIIAQGVPCVAVASNEEARVVRASGFTGQLVRVRLASLSELEDGLQYDMEELVGSAEFARQADAIAARHGKTLRIHMALNSSGMSRNGVEMATWSGRGEALQITDQKHLKLVALMTHFAVEDKDDVRKGLAAFNEQTDWLIKHARLDRSKLTLHAANSFATLEVPEARLDMVRTGGALFGDTVPARTEYKRAMQFKSHVAAVHSYPAGNTVGYDRTFTLARDSRLANITVGYSDGYRRVFTNKGHVLINGHRVPVVGKVSMNTLMVDVTDFPDVKGGNEVVLFGKQAGGEITQAEMEEINGALLADLYTVWGNSNPKILVD.

The N-terminal stretch at 1–24 (MPFRRTLLAASLALLITGQAPLYA) is a signal peptide. C71 and C97 are joined by a disulfide. The active-site Proton acceptor is K75. At K75 the chain carries N6-(pyridoxal phosphate)lysine. R174 is a binding site for substrate. Y301 serves as the catalytic Proton acceptor. Residue M349 participates in substrate binding.

This sequence belongs to the alanine racemase family. Bsr subfamily. It depends on pyridoxal 5'-phosphate as a cofactor.

It is found in the periplasm. The enzyme catalyses an L-alpha-amino acid = a D-alpha-amino acid. The catalysed reaction is L-lysine = D-lysine. It catalyses the reaction L-arginine = D-arginine. It carries out the reaction L-glutamine = D-glutamine. Functionally, amino-acid racemase able to utilize a broad range of substrates. Reversibly racemizes 9 of the 19 natural chiral amino acids known, including both positively charged amino acids (Lys, Arg and His) and non-beta-branched aliphatic amino acids (Ala, Leu, Met, Ser, Gln and Asn). Among these amino acids, activity is the highest with lysine and arginine, and poor or very poor with the others. Plays a primary role in the catabolism of basic amino acid, that allows P.putida strain KT2440 to grow on L-Lys and L-Arg as the sole source of carbon and nitrogen, through conversion to their respective D-enantiomers. This chain is Broad specificity amino-acid racemase, found in Pseudomonas putida (strain ATCC 47054 / DSM 6125 / CFBP 8728 / NCIMB 11950 / KT2440).